Consider the following 384-residue polypeptide: Substance-K receptor (384 aa).

Topologically, residues 1–32 (MGACVVMTDINISSGLDSNATGITAFSMPGWQ) are extracellular. N-linked (GlcNAc...) asparagine glycosylation is found at Asn-11 and Asn-19. The chain crosses the membrane as a helical span at residues 33-56 (LALWTAAYLALVLVAVMGNATVIW). Topologically, residues 57-69 (IILAHQRMRTVTN) are cytoplasmic. The chain crosses the membrane as a helical span at residues 70–90 (YFIVNLALADLCMAAFNAAFN). The Extracellular segment spans residues 91–107 (FVYASHNIWYFGRAFCY). An intrachain disulfide couples Cys-106 to Cys-181. A helical membrane pass occupies residues 108–129 (FQNLFPITAMFVSIYSMTAIAA). Over 130 to 149 (DRYMAIVHPFQPRLSAPGTR) the chain is Cytoplasmic. A helical membrane pass occupies residues 150–170 (AVIAGIWLVALALAFPQCFYS). Residues 171–196 (TITTDEGATKCVVAWPEDSGGKMLLL) are Extracellular-facing. The chain crosses the membrane as a helical span at residues 197–218 (YHLIVIALIYFLPLVVMFVAYS). At 219-251 (VIGLTLWRRSVPGHQAHGANLRHLQAKKKFVKT) the chain is on the cytoplasmic side. Residues 252–272 (MVLVVVTFAICWLPYHLYFIL) form a helical membrane-spanning segment. The Extracellular segment spans residues 273–290 (GTFQEDIYCHKFIQQVYL). A helical membrane pass occupies residues 291–310 (ALFWLAMSSTMYNPIIYCCL). At 311–384 (NHRFRSGFRL…SPQAGVSTEP (74 aa)) the chain is on the cytoplasmic side. A lipid anchor (S-palmitoyl cysteine) is attached at Cys-324.

This sequence belongs to the G-protein coupled receptor 1 family.

It is found in the cell membrane. This is a receptor for the tachykinin neuropeptide substance K (neurokinin A). It is associated with G proteins that activate a phosphatidylinositol-calcium second messenger system. The rank order of affinity of this receptor to tachykinins is: substance K &gt; neuromedin-K &gt; substance P. In Bos taurus (Bovine), this protein is Substance-K receptor (TACR2).